The chain runs to 92 residues: MTRSLKKNPFIAKHLLRKIAMLNTTWEKEIIVTWSRTSTIIPTMIGHTIAVHNGKEHFPIYITDRMVGHKLGEFSSTLNFRGHAKNDNRSRR.

It belongs to the universal ribosomal protein uS19 family.

It is found in the plastid. The protein resides in the chloroplast. Protein S19 forms a complex with S13 that binds strongly to the 16S ribosomal RNA. This chain is Small ribosomal subunit protein uS19c, found in Vitis vinifera (Grape).